The primary structure comprises 314 residues: Ribosomal RNA small subunit methyltransferase H (314 aa).

S-adenosyl-L-methionine contacts are provided by residues 34-36 (GGH), aspartate 53, phenylalanine 82, aspartate 103, and glutamine 110.

The protein belongs to the methyltransferase superfamily. RsmH family.

It localises to the cytoplasm. It carries out the reaction cytidine(1402) in 16S rRNA + S-adenosyl-L-methionine = N(4)-methylcytidine(1402) in 16S rRNA + S-adenosyl-L-homocysteine + H(+). Specifically methylates the N4 position of cytidine in position 1402 (C1402) of 16S rRNA. In Levilactobacillus brevis (strain ATCC 367 / BCRC 12310 / CIP 105137 / JCM 1170 / LMG 11437 / NCIMB 947 / NCTC 947) (Lactobacillus brevis), this protein is Ribosomal RNA small subunit methyltransferase H.